Here is a 237-residue protein sequence, read N- to C-terminus: MSYSRVLLKLSGEALMGSKPYGIDPEIVQSIAQDVSKVVQEGTQLAIVVGGGNIFRGLKGSSAGMDRATADYVGMLATVMNAITLQDGLERAGVETRVQTAIEMQQIAEPYIRRRAIRHLEKGRVVVFGGGCGNPFFTTDTTSALRAAEINADVIFKATKVDGVYNQDPKEYPEAIKYESLTFQEVLSKEIAVMDSTAIALCKDNKIPIVVFNIFQPGNINKAVAGEKIGSRISNSG.

9–12 (KLSG) lines the ATP pocket. Residue Gly51 participates in UMP binding. 2 residues coordinate ATP: Gly52 and Arg56. UMP is bound by residues Asp71 and 132–139 (CGNPFFTT). Residues Thr159, Tyr165, and Asp168 each contribute to the ATP site.

It belongs to the UMP kinase family. In terms of assembly, homohexamer.

The protein localises to the cytoplasm. It carries out the reaction UMP + ATP = UDP + ADP. Its pathway is pyrimidine metabolism; CTP biosynthesis via de novo pathway; UDP from UMP (UMPK route): step 1/1. Its activity is regulated as follows. Inhibited by UTP. Its function is as follows. Catalyzes the reversible phosphorylation of UMP to UDP. In Prochlorococcus marinus (strain SARG / CCMP1375 / SS120), this protein is Uridylate kinase.